A 906-amino-acid chain; its full sequence is Protein translocase subunit SecA (906 aa).

Residues Q87, 105–109 (GEGKT), and D512 each bind ATP. Residues 879–906 (REGEKIGRNDPCPCGSGQKYKQCHGKLS) are disordered. C890, C892, C901, and H902 together coordinate Zn(2+).

The protein belongs to the SecA family. Monomer and homodimer. Part of the essential Sec protein translocation apparatus which comprises SecA, SecYEG and auxiliary proteins SecDF-YajC and YidC. It depends on Zn(2+) as a cofactor.

The protein localises to the cell inner membrane. It localises to the cytoplasm. It catalyses the reaction ATP + H2O + cellular proteinSide 1 = ADP + phosphate + cellular proteinSide 2.. Part of the Sec protein translocase complex. Interacts with the SecYEG preprotein conducting channel. Has a central role in coupling the hydrolysis of ATP to the transfer of proteins into and across the cell membrane, serving both as a receptor for the preprotein-SecB complex and as an ATP-driven molecular motor driving the stepwise translocation of polypeptide chains across the membrane. The sequence is that of Protein translocase subunit SecA from Shewanella frigidimarina (strain NCIMB 400).